The following is a 185-amino-acid chain: Ribosome-recycling factor (185 aa).

Belongs to the RRF family.

Its subcellular location is the cytoplasm. Functionally, responsible for the release of ribosomes from messenger RNA at the termination of protein biosynthesis. May increase the efficiency of translation by recycling ribosomes from one round of translation to another. The polypeptide is Ribosome-recycling factor (Coxiella burnetii (strain CbuK_Q154) (Coxiella burnetii (strain Q154))).